Consider the following 358-residue polypeptide: Dynein axonemal assembly factor 10 (358 aa).

WD repeat units lie at residues 64–106 (EKPK…TPVY), 116–155 (NCID…TPVA), 163–206 (EAKR…VRWE), 208–250 (NIKN…PTKG), 258–298 (AHKS…QRSR), and 320–358 (LSTQ…LNRL).

Interacts with PIH1D1; the interaction associates DNAAF10 with the R2TP complex. Interacts with several dynein axonemal assembly factors.

It is found in the dynein axonemal particle. Its function is as follows. Key assembly factor specifically required for the stability of axonemal dynein heavy chains in cytoplasm. This Xenopus laevis (African clawed frog) protein is Dynein axonemal assembly factor 10 (dnaaf10).